The following is a 204-amino-acid chain: INSIG protein homolog (204 aa).

Transmembrane regions (helical) follow at residues 5–27 (ISEA…HSHV), 47–64 (FWFP…AELR), 76–97 (ARQA…ALVH), 101–118 (VVPV…TWCV), and 124–145 (GAAC…LVQL). Residue H26 participates in a 1,2-diacyl-sn-glycerol binding. Residue Y150 participates in a 1,2-diacyl-sn-glycerol binding. Residues 162 to 179 (PFLAPLYFAFGVVAALLG) traverse the membrane as a helical segment.

This sequence belongs to the INSIG family. As to quaternary structure, homotrimer.

It is found in the membrane. Its function is as follows. Diacylglycerol-binding protein. In Mycolicibacterium vanbaalenii (strain DSM 7251 / JCM 13017 / BCRC 16820 / KCTC 9966 / NRRL B-24157 / PYR-1) (Mycobacterium vanbaalenii), this protein is INSIG protein homolog.